The primary structure comprises 156 residues: Cyanate hydratase (156 aa).

Catalysis depends on residues Arg96, Glu99, and Ser122.

This sequence belongs to the cyanase family. Homodecamer composed of five homodimers.

The enzyme catalyses cyanate + hydrogencarbonate + 3 H(+) = NH4(+) + 2 CO2. Its function is as follows. Catalyzes the reaction of cyanate with bicarbonate to produce ammonia and carbon dioxide. This chain is Cyanate hydratase (cynS), found in Escherichia coli O157:H7.